The following is a 715-amino-acid chain: Fatty acid oxidation complex subunit alpha (715 aa).

The segment at 1 to 190 (MTTTSAFMLN…KAGLVDDVVP (190 aa)) is enoyl-CoA hydratase. A 3-hydroxyacyl-CoA dehydrogenase region spans residues 306-715 (GPLNSVGILG…WTNGETDQGN (410 aa)).

The protein in the N-terminal section; belongs to the enoyl-CoA hydratase/isomerase family. In the central section; belongs to the 3-hydroxyacyl-CoA dehydrogenase family. In terms of assembly, heterotetramer of two alpha chains (FadJ) and two beta chains (FadI).

Its subcellular location is the cytoplasm. It carries out the reaction a (3S)-3-hydroxyacyl-CoA = a (2E)-enoyl-CoA + H2O. It catalyses the reaction a 4-saturated-(3S)-3-hydroxyacyl-CoA = a (3E)-enoyl-CoA + H2O. The catalysed reaction is a (3S)-3-hydroxyacyl-CoA + NAD(+) = a 3-oxoacyl-CoA + NADH + H(+). The enzyme catalyses (3S)-3-hydroxybutanoyl-CoA = (3R)-3-hydroxybutanoyl-CoA. The protein operates within lipid metabolism; fatty acid beta-oxidation. Its function is as follows. Catalyzes the formation of a hydroxyacyl-CoA by addition of water on enoyl-CoA. Also exhibits 3-hydroxyacyl-CoA epimerase and 3-hydroxyacyl-CoA dehydrogenase activities. This Salmonella enteritidis PT4 (strain P125109) protein is Fatty acid oxidation complex subunit alpha.